We begin with the raw amino-acid sequence, 336 residues long: Cycloartenol-C-24-methyltransferase (336 aa).

Met1 carries the post-translational modification N-acetylmethionine.

It belongs to the class I-like SAM-binding methyltransferase superfamily. Erg6/SMT family. As to expression, highly expressed in vascular tissue, mature leaves and in regions undergoing cellular expansion.

It catalyses the reaction cycloartenol + S-adenosyl-L-methionine = 24-methylenecycloartanol + S-adenosyl-L-homocysteine + H(+). Its pathway is steroid biosynthesis; sterol biosynthesis. In terms of biological role, catalyzes the methyl transfer from S-adenosyl-methionine to the C-24 of cycloartenol to form 24-methylene cycloartenol. The chain is Cycloartenol-C-24-methyltransferase (SMT1) from Arabidopsis thaliana (Mouse-ear cress).